We begin with the raw amino-acid sequence, 497 residues long: MORN repeat-containing protein 1 (497 aa).

Residues 1 to 27 (MAAAGEGTPSSRGPRRDPPRRPPRNGY) form a disordered region. MORN repeat units lie at residues 39–61 (YEGE…DGSY), 62–84 (YEGA…WSGD), 86–108 (FSGQ…AGGC), 109–131 (YEGE…DGQV), 132–154 (YQGS…NGDK), 155–177 (YDGD…DGST), and 178–200 (YKGQ…SGVT). Disordered regions lie at residues 393–425 (GGRS…ATEE) and 468–497 (QPPH…PAPR).

This chain is MORN repeat-containing protein 1 (MORN1), found in Homo sapiens (Human).